Reading from the N-terminus, the 184-residue chain is Photosystem I assembly protein Ycf4 (184 aa).

The next 2 membrane-spanning stretches (helical) occupy residues 25–45 and 57–77; these read ACIL…SYLG and ILFV…LFIS.

This sequence belongs to the Ycf4 family.

The protein localises to the plastid. The protein resides in the chloroplast thylakoid membrane. Seems to be required for the assembly of the photosystem I complex. In Cycas taitungensis (Prince sago), this protein is Photosystem I assembly protein Ycf4.